A 341-amino-acid polypeptide reads, in one-letter code: Phenylalanine--tRNA ligase alpha subunit (341 aa).

Position 252 (E252) interacts with Mg(2+).

It belongs to the class-II aminoacyl-tRNA synthetase family. Phe-tRNA synthetase alpha subunit type 1 subfamily. Tetramer of two alpha and two beta subunits. It depends on Mg(2+) as a cofactor.

It is found in the cytoplasm. It carries out the reaction tRNA(Phe) + L-phenylalanine + ATP = L-phenylalanyl-tRNA(Phe) + AMP + diphosphate + H(+). This is Phenylalanine--tRNA ligase alpha subunit from Malacoplasma penetrans (strain HF-2) (Mycoplasma penetrans).